A 183-amino-acid chain; its full sequence is Outer membrane protein H.8 (183 aa).

The N-terminal stretch at 1–17 (MKAYLALISAAVIGLAA) is a signal peptide. Cysteine 18 carries N-palmitoyl cysteine lipidation. Cysteine 18 is lipidated: S-diacylglycerol cysteine. A disordered region spans residues 27–51 (AEATPAAEAPASEAPAAEAAPADAA). A Plastocyanin-like domain is found at 57–183 (GNCAATVESN…LMNGKVTLVD (127 aa)). Cu cation is bound by residues histidine 102, cysteine 166, histidine 171, and methionine 175.

Cu cation is required as a cofactor.

It is found in the cell outer membrane. In Neisseria meningitidis serogroup C / serotype 2a (strain ATCC 700532 / DSM 15464 / FAM18), this protein is Outer membrane protein H.8.